We begin with the raw amino-acid sequence, 412 residues long: Alanyl-tRNA editing protein Aarsd1 (412 aa).

The Zn(2+) site is built by His-108, His-112, Cys-208, and His-212.

The protein belongs to the class-II aminoacyl-tRNA synthetase family. Alax-L subfamily. The cofactor is Zn(2+).

The protein resides in the cytoplasm. Functions in trans to edit the amino acid moiety from incorrectly charged tRNA(Ala). The polypeptide is Alanyl-tRNA editing protein Aarsd1 (aarsd1) (Danio rerio (Zebrafish)).